Consider the following 450-residue polypeptide: Ammonium transporter Rh type A (450 aa).

Residues 1 to 4 (MRFK) lie on the Cytoplasmic side of the membrane. The helical transmembrane segment at 5–25 (FSLIALSLEVVMIVSFALFVE) threads the bilayer. Residues 26 to 72 (YETSQNGSQKSASQQNASQQNAAAQQNASQQGNASSPAKEDQFFQLY) lie on the Extracellular side of the membrane. N-linked (GlcNAc...) asparagine glycosylation is found at Asn31, Asn41, Asn52, and Asn58. The disordered stretch occupies residues 34-61 (QKSASQQNASQQNAAAQQNASQQGNASS). The chain crosses the membrane as a helical span at residues 73–93 (PLFQHVHVMIFVGFGFLMTFL). The Cytoplasmic segment spans residues 94–97 (KKYG). Residues 98–118 (FSGVGFNLFLAALGLQWGTIV) form a helical membrane-spanning segment. Residues 119-134 (QGLLHSHGLKFPFRIK) are Extracellular-facing. Residues 135–155 (NMINADFSTATVLISFGAVLG) traverse the membrane as a helical segment. Over 156–159 (KTSP) the chain is Cytoplasmic. Residues 160–180 (IQMIIMTILEIAVFAGNEHLV) traverse the membrane as a helical segment. Residues 181 to 189 (TEIFKASDT) are Extracellular-facing. The chain crosses the membrane as a helical span at residues 190–210 (GASMTIHAFGAYFGLAVAGVL). Topologically, residues 211-229 (YRSGLKHGHPNEESVYHSD) are cytoplasmic. The chain crosses the membrane as a helical span at residues 230–250 (LFAMIGTLFLWMFWPSFNSAI). The Extracellular portion of the chain corresponds to 251-260 (AQPENNQYRA). The chain crosses the membrane as a helical span at residues 261 to 281 (IVNTYMSLAACVITAYALSSL). Residues 282–289 (VERRGRLD) lie on the Cytoplasmic side of the membrane. Residues 290–307 (MVHIQNATLAGGVAVGTC) form a helical membrane-spanning segment. Residues 308-311 (ADME) lie on the Extracellular side of the membrane. Residues 312 to 332 (IPLYFAMTIGSIAGIISVLGY) form a helical membrane-spanning segment. At 333–349 (KFLSPLLAHKLMIHDTC) the chain is on the cytoplasmic side. The helical transmembrane segment at 350–370 (GVHNLHGLPGVFGGLASIVAI) threads the bilayer. Topologically, residues 371–384 (SWGKSTVSTMAMQA) are extracellular. A helical transmembrane segment spans residues 385-405 (TALGSSIGSAIVGGLVTGLIL). At 406-450 (KLPVWNQPPDEYCFDDSVSWKVPKYRELDNYFFQHVTHNHVEHEV) the chain is on the cytoplasmic side.

Belongs to the ammonium transporter (TC 2.A.49) family. Rh subfamily. In terms of assembly, homodimer. Heterotrimer; a RHCE monomer interacts with a RHAG homodimer. Component of the ankyrin-1 complex in the erythrocyte, composed of ANK1, RHCE, RHAG, SLC4A1, EPB42, GYPA, GYPB and AQP1. Interacts with GYPB (via the N-terminal); this interaction bridges the (RHAG)2(RHCE) heterotrimer with the SLC4A1 Band 3 I dimer complexed with GYPA. Post-translationally, glycosylated.

Its subcellular location is the membrane. The catalysed reaction is methylamine(out) = methylamine(in). It catalyses the reaction NH4(+)(in) = NH4(+)(out). It carries out the reaction CO2(out) = CO2(in). Component of the ankyrin-1 complex, a multiprotein complex involved in the stability and shape of the erythrocyte membrane. Heterotrimer with RHCE (RHAG)2(RHCE), that transports ammonium and its related derivative methylammonium, in both neutral and ionic forms, across the erythrocyte membrane. The transport of NH4(+) is electrogenic and masks the NH3 transport. Also, may act as a CO2 channel. Moreover in erythrocyte, regulates RHD membrane expression and is associated with rhesus blood group antigen expression. The chain is Ammonium transporter Rh type A from Rattus norvegicus (Rat).